The sequence spans 112 residues: 87 kDa annexin-binding protein (112 aa).

In terms of assembly, binds annexin.

In Physarum polycephalum (Slime mold), this protein is 87 kDa annexin-binding protein.